The sequence spans 274 residues: NH(3)-dependent NAD(+) synthetase (274 aa).

Gly46 to Ser53 contributes to the ATP binding site. Asp52 is a binding site for Mg(2+). Arg140 is a deamido-NAD(+) binding site. ATP is bound at residue Thr160. Position 165 (Glu165) interacts with Mg(2+). The deamido-NAD(+) site is built by Lys173 and Asp180. ATP contacts are provided by Lys189 and Thr211. His260 to Lys261 is a deamido-NAD(+) binding site.

It belongs to the NAD synthetase family. In terms of assembly, homodimer.

It catalyses the reaction deamido-NAD(+) + NH4(+) + ATP = AMP + diphosphate + NAD(+) + H(+). It functions in the pathway cofactor biosynthesis; NAD(+) biosynthesis; NAD(+) from deamido-NAD(+) (ammonia route): step 1/1. In terms of biological role, catalyzes the ATP-dependent amidation of deamido-NAD to form NAD. Uses ammonia as a nitrogen source. The polypeptide is NH(3)-dependent NAD(+) synthetase (Streptococcus pyogenes serotype M2 (strain MGAS10270)).